The sequence spans 517 residues: L-amino-acid oxidase (517 aa).

The first 18 residues, 1–18, serve as a signal peptide directing secretion; the sequence is MNVFFMFSLLFLAALESC. The cysteines at positions 29 and 192 are disulfide-linked. FAD is bound by residues 62-63, 82-83, Arg-90, and 106-109; these read MA, EA, and GPMR. Arg-109 contributes to the substrate binding site. A glycan (N-linked (GlcNAc...) asparagine) is linked at Asn-191. Position 280 (Val-280) interacts with FAD. Cysteines 350 and 431 form a disulfide. A glycan (N-linked (GlcNAc...) asparagine) is linked at Asn-380. Substrate is bound at residue Tyr-391. Residues Glu-476 and 483 to 488 each bind FAD; that span reads GWLDST. 483-484 contacts substrate; that stretch reads GW.

This sequence belongs to the flavin monoamine oxidase family. FIG1 subfamily. As to quaternary structure, homodimer; non-covalently linked. It depends on FAD as a cofactor. Post-translationally, N-glycosylated. As to expression, expressed by the venom gland.

Its subcellular location is the secreted. It catalyses the reaction an L-alpha-amino acid + O2 + H2O = a 2-oxocarboxylate + H2O2 + NH4(+). Functionally, catalyzes an oxidative deamination of predominantly hydrophobic and aromatic L-amino acids, thus producing hydrogen peroxide that may contribute to the diverse toxic effects of this enzyme. Exhibits diverse biological activities, such as hemorrhage, hemolysis, edema, apoptosis of vascular endothelial cells or tumor cell lines, antibacterial and antiparasitic activities, as well as regulation of platelet aggregation. Effects of snake L-amino oxidases on platelets are controversial, since they either induce aggregation or inhibit agonist-induced aggregation. These different effects are probably due to different experimental conditions. The sequence is that of L-amino-acid oxidase from Notechis scutatus scutatus (Mainland tiger snake).